Reading from the N-terminus, the 393-residue chain is Phosphoglycerate kinase (393 aa).

Substrate-binding positions include 22 to 24 (DFN), Arg-37, 60 to 63 (HLGR), Arg-119, and Arg-152. ATP contacts are provided by residues Lys-202, Gly-293, Glu-324, and 350–353 (GGDS).

It belongs to the phosphoglycerate kinase family. As to quaternary structure, monomer.

It localises to the cytoplasm. The enzyme catalyses (2R)-3-phosphoglycerate + ATP = (2R)-3-phospho-glyceroyl phosphate + ADP. The protein operates within carbohydrate degradation; glycolysis; pyruvate from D-glyceraldehyde 3-phosphate: step 2/5. This is Phosphoglycerate kinase from Borreliella burgdorferi (strain ZS7) (Borrelia burgdorferi).